A 570-amino-acid polypeptide reads, in one-letter code: PTS system lactose-specific EIICB component (570 aa).

The 402-residue stretch at 9 to 410 (IEKGKPFFEK…VVDIIIYYPF (402 aa)) folds into the PTS EIIC type-3 domain. 9 consecutive transmembrane segments (helical) span residues 31–51 (GFIS…IAYV), 65–85 (AILM…VAGT), 104–124 (INFI…ASDP), 133–153 (AFMG…TVIV), 178–198 (FKDL…DLVI), 223–243 (GWIG…VGIH), 283–303 (MFIV…MFMW), 340–360 (VFFI…KLFV), and 382–402 (IIMG…LIVV). Residues 467-570 (QTNVLVLCAG…LDFVQQQFEN (104 aa)) enclose the PTS EIIB type-3 domain. Cys-474 (phosphocysteine intermediate; for EIIB activity) is an active-site residue. Cys-474 carries the post-translational modification Phosphocysteine; by EIIA.

The protein localises to the cell membrane. The catalysed reaction is lactose(out) + N(pros)-phospho-L-histidyl-[protein] = lactose 6-phosphate(in) + L-histidyl-[protein]. Its function is as follows. The phosphoenolpyruvate-dependent sugar phosphotransferase system (sugar PTS), a major carbohydrate active transport system, catalyzes the phosphorylation of incoming sugar substrates concomitantly with their translocation across the cell membrane. The enzyme II LacEF PTS system is involved in lactose transport, but can also use galactose, isopropyl beta-thio-galactopyranoside and thiomethyl beta-D-galactopyranoside (TMG) as substrates. This Staphylococcus aureus protein is PTS system lactose-specific EIICB component.